A 435-amino-acid chain; its full sequence is Homoserine dehydrogenase (435 aa).

Thr13, Val14, Arg43, and Lys105 together coordinate NADPH. Val14 lines the NAD(+) pocket. NADP(+)-binding residues include Val14, Arg43, and Lys105. The Na(+) site is built by Glu129, Val132, Gly134, and Ile136. The active-site Proton donor is the Lys204. 2 disordered regions span residues 255 to 274 (ARGV…TPDR) and 377 to 402 (RCDD…PDHV). 2 stretches are compositionally biased toward basic and acidic residues: residues 262 to 274 (RAPD…TPDR) and 377 to 391 (RCDD…AERR).

It belongs to the homoserine dehydrogenase family. Requires a metal cation as cofactor.

It carries out the reaction L-homoserine + NADP(+) = L-aspartate 4-semialdehyde + NADPH + H(+). The enzyme catalyses L-homoserine + NAD(+) = L-aspartate 4-semialdehyde + NADH + H(+). The protein operates within amino-acid biosynthesis; L-methionine biosynthesis via de novo pathway; L-homoserine from L-aspartate: step 3/3. Its pathway is amino-acid biosynthesis; L-threonine biosynthesis; L-threonine from L-aspartate: step 3/5. Its function is as follows. Catalyzes the conversion of L-aspartate-beta-semialdehyde (L-Asa) to L-homoserine (L-Hse), the third step in the biosynthesis of threonine and methionine from aspartate. The chain is Homoserine dehydrogenase (hom) from Methylobacillus glycogenes.